We begin with the raw amino-acid sequence, 171 residues long: UPF0098 protein aq_1250 (171 aa).

The protein belongs to the UPF0098 family.

This Aquifex aeolicus (strain VF5) protein is UPF0098 protein aq_1250.